A 109-amino-acid polypeptide reads, in one-letter code: Glutaredoxin-C13 (109 aa).

Positions 2–108 constitute a Glutaredoxin domain; the sequence is AEMVARLASE…PMLKNAGALW (107 aa). A disulfide bridge links Cys-22 with Cys-25. Positions 106–109 match the Responsive for interaction with TGA factors motif; sequence ALWL.

This sequence belongs to the glutaredoxin family. CC-type subfamily.

Its subcellular location is the cytoplasm. The protein resides in the nucleus. Functionally, has a glutathione-disulfide oxidoreductase activity in the presence of NADPH and glutathione reductase. Reduces low molecular weight disulfides and proteins. The chain is Glutaredoxin-C13 (GRXC13) from Oryza sativa subsp. japonica (Rice).